The sequence spans 419 residues: UDP-arabinose 4-epimerase 1 (419 aa).

The disordered stretch occupies residues 1–21 (MFSFGRARSQGRQNRSMSLGG). Residues 1-32 (MFSFGRARSQGRQNRSMSLGGLDYADPKKKNN) lie on the Cytoplasmic side of the membrane. The chain crosses the membrane as a helical; Signal-anchor for type II membrane protein span at residues 33–51 (YLGKILLTASLTALCIFML). The Lumenal segment spans residues 52 to 419 (KQSPTFNTPS…GLTTSSVSVY (368 aa)). 72 to 103 (HVLVTGGAGYIGSHAALRLLKESYRVTIVDNL) contacts NAD(+). Tyr220 acts as the Proton acceptor in catalysis.

This sequence belongs to the NAD(P)-dependent epimerase/dehydratase family. It depends on NAD(+) as a cofactor. As to expression, high expression in roots. Also found in leaves, stems, flowers, and siliques.

The protein localises to the golgi apparatus. The protein resides in the golgi stack membrane. It carries out the reaction UDP-beta-L-arabinopyranose = UDP-alpha-D-xylose. Its pathway is nucleotide-sugar biosynthesis; UDP-L-arabinose biosynthesis; UDP-L-arabinose from UDP-alpha-D-xylose: step 1/1. The protein operates within cell wall biogenesis; cell wall polysaccharide biosynthesis. Acts as a UDP-D-xylose 4-epimerase but lacks both UDP-D-glucose and UDP-D-glucuronic acid 4-epimerase activities in vitro. The chain is UDP-arabinose 4-epimerase 1 from Arabidopsis thaliana (Mouse-ear cress).